Here is a 192-residue protein sequence, read N- to C-terminus: Interleukin-18 (192 aa).

The propeptide occupies 1–35 (MAAIPVDDCINFVGMKFIDNTLYFVADSDENLETD).

This sequence belongs to the IL-1 family. Forms a ternary complex with ligand-binding receptor subunit IL18R1 and signaling receptor subunit IL18RAP at the plasma membrane. Mature IL18 first binds to IL18R1 forming a low affinity binary complex, which then interacts with IL18RAP to form a high affinity ternary complex that signals inside the cell. Interacts with cargo receptor TMED10; the interaction mediates the translocation from the cytoplasm into the ERGIC (endoplasmic reticulum-Golgi intermediate compartment) and thereby secretion. The pro-IL-18 precursor is processed by CASP1, CASP4 or CASP5 to yield its mature, active form. The pro-IL-18 precursor features autoinhibitory interactions between the propeptide and the post-cleavage-site region, preventing recognition by the IL18R1 receptor. Processing by CASP1, CASP4 or CASP5 induces conformational changes to generate critical receptor-binding sites. The mature form is then secreted and released in the extracellular milieu by passing through the gasdermin-D (GSDMD) pore. In contrast, cleavage by CASP3 inactivates IL18.

The protein localises to the cytoplasm. It localises to the cytosol. Its subcellular location is the secreted. Its function is as follows. Pro-inflammatory cytokine primarily involved in epithelial barrier repair, polarized T-helper 1 (Th1) cell and natural killer (NK) cell immune responses. Upon binding to IL18R1 and IL18RAP, forms a signaling ternary complex which activates NF-kappa-B, triggering synthesis of inflammatory mediators. Synergizes with IL12/interleukin-12 to induce IFNG synthesis from T-helper 1 (Th1) cells and natural killer (NK) cells. Involved in transduction of inflammation downstream of pyroptosis: its mature form is specifically released in the extracellular milieu by passing through the gasdermin-D (GSDMD) pore. This chain is Interleukin-18 (IL18), found in Felis catus (Cat).